Consider the following 197-residue polypeptide: Small ribosomal subunit protein uS7 (197 aa).

It belongs to the universal ribosomal protein uS7 family. As to quaternary structure, part of the 30S ribosomal subunit.

Its function is as follows. One of the primary rRNA binding proteins, it binds directly to 16S rRNA where it nucleates assembly of the head domain of the 30S subunit. Is located at the subunit interface close to the decoding center. The chain is Small ribosomal subunit protein uS7 from Methanopyrus kandleri (strain AV19 / DSM 6324 / JCM 9639 / NBRC 100938).